A 1079-amino-acid chain; its full sequence is Extracellular calcium-sensing receptor (1079 aa).

The first 19 residues, 1 to 19 (MAWFGYCLALLALTWHSSA), serve as a signal peptide directing secretion. Residues 20–610 (YGPDQRAQKK…KEIEFLAWTE (591 aa)) are Extracellular-facing. Positions 22–188 (PDQRAQKKGD…QFKSFLRTIP (167 aa)) are ligand-binding 1 (LB1). The cysteines at positions 60 and 101 are disulfide-linked. 66–70 (RGFRW) lines the phosphate pocket. I81, S84, L87, and L88 together coordinate Ca(2+). A glycan (N-linked (GlcNAc...) asparagine) is linked at N90. T100 is a Ca(2+) binding site. N130 carries N-linked (GlcNAc...) asparagine glycosylation. T145 is a Ca(2+) binding site. Residues S147, A168, and S170 each coordinate L-tryptophan. Ca(2+)-binding residues include S170, P188, D190, E231, and D234. The ligand-binding 2 (LB2) stretch occupies residues 189–324 (NDEHQATAMA…GGTIGFGLKA (136 aa)). 7 disulfides stabilise this stretch: C236/C561, C358/C395, C437/C449, C542/C562, C546/C565, C568/C582, and C585/C598. D238 and S240 together coordinate spermine. 2 N-linked (GlcNAc...) asparagine glycosylation sites follow: N261 and N287. Ca(2+) is bound at residue E297. E297 contacts L-tryptophan. N-linked (GlcNAc...) asparagine glycosylation is present at N386. 415 to 417 (RIS) serves as a coordination point for phosphate. N446, N468, and N488 each carry an N-linked (GlcNAc...) asparagine glycan. Y489 provides a ligand contact to Ca(2+). Residue N541 is glycosylated (N-linked (GlcNAc...) asparagine). The interval 542-612 (CSRDCQAGTR…IEFLAWTEPF (71 aa)) is cysteine-rich (CR). A Ca(2+)-binding site is contributed by G557. N-linked (GlcNAc...) asparagine glycosylation is present at N594. A helical membrane pass occupies residues 611–636 (PFGIALTLFAVLGIFLTAFVLGVFIK). Residues 637 to 648 (FRNTPIVKATNR) are Cytoplasmic-facing. Residues 637 to 648 (FRNTPIVKATNR) form an intracellular loop 1 (ICL1) region. Residues 649–668 (ELSYLLLFSLLCCFSSSLFF) traverse the membrane as a helical segment. Residues 669–674 (IGEPQD) lie on the Extracellular side of the membrane. A helical transmembrane segment spans residues 675 to 698 (WTCRLRQPAFGISFVLCISCILVK). Topologically, residues 699–722 (TNRVLLVFEAKIPTSFHRKWWGLN) are cytoplasmic. The interval 699–722 (TNRVLLVFEAKIPTSFHRKWWGLN) is intracellular loop 2 (ICL2). Residues 723-745 (LQFLLVFLCTFMQIVICIIWLYT) traverse the membrane as a helical segment. Topologically, residues 746 to 769 (APPSSYRNHELEDEIIFITCHEGS) are extracellular. Residues 770–789 (LMALGSLIGYTCLLAAICFF) traverse the membrane as a helical segment. Residues 790 to 805 (FAFKSRKLPENFNEAK) lie on the Cytoplasmic side of the membrane. Positions 790–805 (FAFKSRKLPENFNEAK) are intracellular loop 3 (ICL3). The helical transmembrane segment at 806–828 (FITFSMLIFFIVWISFIPAYAST) threads the bilayer. The Extracellular portion of the chain corresponds to 829–832 (YGKF). The chain crosses the membrane as a helical span at residues 833–854 (VSAVEVIAILAASFGLLACIFF). Over 855 to 1079 (NKVYIILFKP…SSVTENILHS (225 aa)) the chain is Cytoplasmic. A C-terminus region spans residues 855 to 1079 (NKVYIILFKP…SSVTENILHS (225 aa)). The interval 880 to 900 (AFKVAARATLRRPNISRKRSS) is interaction with RNF19A. T888 bears the Phosphothreonine mark. The arginine-rich retention motif stretch occupies residues 890 to 898 (RRPNISRKR). Residues 894 to 964 (ISRKRSSSLG…QQQPQQPRCK (71 aa)) form a disordered region. S899 is subject to Phosphoserine. The span at 900–918 (SSLGGSTGSIPSSSISSKS) shows a compositional bias: low complexity. Basic and acidic residues predominate over residues 919-931 (NSEDRFPQPERQK). Residue S920 is modified to Phosphoserine. The span at 932 to 961 (QQQPLALTQQEQQQQPLTLQPQQQQQPQQP) shows a compositional bias: low complexity. S1062 is modified (phosphoserine).

Belongs to the G-protein coupled receptor 3 family. Homodimer; disulfide-linked. Interacts with VCP. Interacts with ARRB1. Phosphorylation at Thr-888 by PKC impairs coupling with G(q)/G(11) G-proteins, while it does not affect G(i)/G(o)-coupling. Phosphorylation at Ser-899 by PKA promote plasma membrane localization. In terms of processing, ubiquitinated by RNF19A; which induces proteasomal degradation. In terms of tissue distribution, epidermis, kidney and cartilage.

Its subcellular location is the cell membrane. Its activity is regulated as follows. In resting state, adopts an open conformation, anion-binding promoting the inactive configuration. Upon aromatic amino acid-binding, the groove in the extracellular venus flytrap module is closed, thereby inducing the formation of a novel homodimer interface between subunits. Calcium ions stabilize the active state by enhancing homodimer interactions between membrane-proximal domains to fully activate the receptor. Upon activation, the homodimer adopts an asymmetric configuration of the 7-transmembrane region that primes one protomer for G-protein coupling. G-protein binding expands the transmembrane dimer interface; the restriction imposed by the receptor dimer, in combination with intracellular loop 2 (ICL2), enables G-protein activation by facilitating conformational transition of G-protein alpha. Coupling to different classes of G-proteins results in distinct CASR-G-protein interfaces. Functionally, G-protein-coupled receptor that senses changes in the extracellular concentration of calcium ions and plays a key role in maintaining calcium homeostasis. Senses fluctuations in the circulating calcium concentration: activated by elevated circulating calcium, leading to decreased parathyroid hormone (PTH) secretion in parathyroid glands. In kidneys, acts as a key regulator of renal tubular calcium resorption. Ligand binding causes a conformation change that triggers signaling via guanine nucleotide-binding proteins (G-proteins) and modulates the activity of downstream effectors. CASR is coupled with different G(q)/G(11), G(i)/G(o)- or G(s)-classes of G-proteins depending on the context. In the parathyroid and kidney, CASR signals through G(q)/G(11) and G(i)/G(o) G-proteins: G(q)/G(11) coupling activates phospholipase C-beta, releasing diacylglycerol (DAG) and inositol 1,4,5-trisphosphate (IP3) second messengers, while G(i)/G(o) coupling mediates inhibition of adenylate cyclase activity. The G-protein-coupled receptor activity is activated by a co-agonist mechanism: aromatic amino acids, such as Trp or Phe, act concertedly with divalent cations, such as calcium or magnesium, to achieve full receptor activation. Acts as an activator of the NLRP3 inflammasome via G(i)/G(o)-mediated signaling: down-regulation of cyclic AMP (cAMP) relieving NLRP3 inhibition by cAMP. Acts as a regulator of proton-sensing receptor GPR68 in a seesaw manner: CASR-mediated signaling inhibits GPR68 signaling in response to extracellular calcium, while GPR68 inhibits CASR in presence of extracellular protons. The chain is Extracellular calcium-sensing receptor from Mus musculus (Mouse).